A 453-amino-acid polypeptide reads, in one-letter code: MAYFPHTPQEIREMLNTIGVDSIEELFSEIPEEIRQKAKENFKLSASPSEIDLLEEIKQISKKNIGKDYISFLGGGAYRHYIPSFVKLVSLFPTFYTSYTPYQPEISQGVLQSIFEYQSLICDLTGMEVANASLYEAGSGIAEAALMSVRITGKKEVIVSSGLNPEYISVLKTYLQVQNIDLKILPLDENGETDITALERTISPSTSGVILQNPNFFGVIETKLKEMETLIHKNNALFILSIYPISLGILKPPSEYNVDIVVGEGQSLGIPLGFGGPYLGILATKKEFIRQIPGRIVGETIDLEGERGFVNTLQTREQHIRRAKATSNICTNEALSAISAAVYMALLGKKGIKKIAEVCFSRAHYLKDRLQKKLGIDFIYPNSYFFNEFVIKTPENSKVFLKKLEERKILGGIPLSKFYKEREKEILIAVTERNSIEEIDYYVKSLKEVLKKD.

The protein belongs to the GcvP family. N-terminal subunit subfamily. As to quaternary structure, the glycine cleavage system is composed of four proteins: P, T, L and H. In this organism, the P 'protein' is a heterodimer of two subunits.

The catalysed reaction is N(6)-[(R)-lipoyl]-L-lysyl-[glycine-cleavage complex H protein] + glycine + H(+) = N(6)-[(R)-S(8)-aminomethyldihydrolipoyl]-L-lysyl-[glycine-cleavage complex H protein] + CO2. The glycine cleavage system catalyzes the degradation of glycine. The P protein binds the alpha-amino group of glycine through its pyridoxal phosphate cofactor; CO(2) is released and the remaining methylamine moiety is then transferred to the lipoamide cofactor of the H protein. This Dictyoglomus turgidum (strain DSM 6724 / Z-1310) protein is Probable glycine dehydrogenase (decarboxylating) subunit 1.